The sequence spans 341 residues: MAKVYYNGDANEQYLQGKTVAIIGYGSQGHAHAQNLRDSGVHVIIGLRKGRSWEQAEQDGFDVYSVREASKKADIVMVLLPDEKQPAVYKEEIEPELKPGNALVFAHGFNIHFSQIVPPEHVDVFLVAPKGPGHLVRRTYVEGAGVPALIAVYQDVTGHAKETALAYAKAIGAARAGVLETTFKEETETDLFGEQAVLCGGLTALIKAGFETLVEAGYQPEVAYFECLHEMKLIVDLLYEGGLSWMRYSISDTAQWGDFTSGPRVINEAVKAEMKNILHDIQTGKFAKGWILENQANRPEFNAINQRENEHLIEVVGRELRSMMPFVKAKQKEVVVPGAKN.

The KARI N-terminal Rossmann domain occupies 2–181; it reads AKVYYNGDAN…GAARAGVLET (180 aa). Residues 25–28, arginine 48, serine 52, and 82–85 each bind NADP(+); these read YGSQ and DEKQ. Histidine 107 is an active-site residue. Residue glycine 133 coordinates NADP(+). The 146-residue stretch at 182–327 folds into the KARI C-terminal knotted domain; that stretch reads TFKEETETDL…RELRSMMPFV (146 aa). Residues aspartate 190, glutamate 194, glutamate 226, and glutamate 230 each coordinate Mg(2+). Serine 251 contributes to the substrate binding site.

It belongs to the ketol-acid reductoisomerase family. It depends on Mg(2+) as a cofactor.

It catalyses the reaction (2R)-2,3-dihydroxy-3-methylbutanoate + NADP(+) = (2S)-2-acetolactate + NADPH + H(+). The enzyme catalyses (2R,3R)-2,3-dihydroxy-3-methylpentanoate + NADP(+) = (S)-2-ethyl-2-hydroxy-3-oxobutanoate + NADPH + H(+). The protein operates within amino-acid biosynthesis; L-isoleucine biosynthesis; L-isoleucine from 2-oxobutanoate: step 2/4. Its pathway is amino-acid biosynthesis; L-valine biosynthesis; L-valine from pyruvate: step 2/4. Functionally, involved in the biosynthesis of branched-chain amino acids (BCAA). Catalyzes an alkyl-migration followed by a ketol-acid reduction of (S)-2-acetolactate (S2AL) to yield (R)-2,3-dihydroxy-isovalerate. In the isomerase reaction, S2AL is rearranged via a Mg-dependent methyl migration to produce 3-hydroxy-3-methyl-2-ketobutyrate (HMKB). In the reductase reaction, this 2-ketoacid undergoes a metal-dependent reduction by NADPH to yield (R)-2,3-dihydroxy-isovalerate. This is Ketol-acid reductoisomerase (NADP(+)) from Geobacillus thermodenitrificans (strain NG80-2).